Here is a 280-residue protein sequence, read N- to C-terminus: Phosphatidylglycerol--prolipoprotein diacylglyceryl transferase (280 aa).

The next 3 helical transmembrane spans lie at 15–35, 60–80, and 90–110; these read IFSI…IFAL, FIGL…PVFF, and IWEG…VLLF. R138 contributes to the a 1,2-diacyl-sn-glycero-3-phospho-(1'-sn-glycerol) binding site. A run of 2 helical transmembrane segments spans residues 217–237 and 257–277; these read MPFG…RIFL and GQLL…NIYV.

It belongs to the Lgt family.

The protein localises to the cell membrane. The catalysed reaction is L-cysteinyl-[prolipoprotein] + a 1,2-diacyl-sn-glycero-3-phospho-(1'-sn-glycerol) = an S-1,2-diacyl-sn-glyceryl-L-cysteinyl-[prolipoprotein] + sn-glycerol 1-phosphate + H(+). It functions in the pathway protein modification; lipoprotein biosynthesis (diacylglyceryl transfer). In terms of biological role, catalyzes the transfer of the diacylglyceryl group from phosphatidylglycerol to the sulfhydryl group of the N-terminal cysteine of a prolipoprotein, the first step in the formation of mature lipoproteins. The sequence is that of Phosphatidylglycerol--prolipoprotein diacylglyceryl transferase from Buchnera aphidicola subsp. Baizongia pistaciae (strain Bp).